The chain runs to 610 residues: Elongation factor 4 (610 aa).

The tr-type G domain maps to 11–193 (EKIRNFSIIA…QIVEKVPAPT (183 aa)). GTP is bound by residues 23–28 (DHGKST) and 140–143 (NKID).

It belongs to the TRAFAC class translation factor GTPase superfamily. Classic translation factor GTPase family. LepA subfamily.

The protein resides in the cell membrane. It carries out the reaction GTP + H2O = GDP + phosphate + H(+). In terms of biological role, required for accurate and efficient protein synthesis under certain stress conditions. May act as a fidelity factor of the translation reaction, by catalyzing a one-codon backward translocation of tRNAs on improperly translocated ribosomes. Back-translocation proceeds from a post-translocation (POST) complex to a pre-translocation (PRE) complex, thus giving elongation factor G a second chance to translocate the tRNAs correctly. Binds to ribosomes in a GTP-dependent manner. The polypeptide is Elongation factor 4 (Streptococcus pyogenes serotype M12 (strain MGAS9429)).